Reading from the N-terminus, the 93-residue chain is Serine rich endogenous peptide 6 (93 aa).

Residues 1-27 (MGTKCYSKLRYVVVLVLLLFVFPCSLS) form the signal peptide. 2 consecutive short sequence motifs (SCOOP motif) follow at residues 48 to 62 (GIIA…APNI) and 73 to 87 (ISEA…GGGR). Residues 52–93 (GSSPSGQAPNINNNYHGRRLMISEARPSKSKKGGGREPESPG) form a disordered region. Over residues 53–66 (SSPSGQAPNINNNY) the composition is skewed to polar residues. Short sequence motifs (sxS motif essential for MIK2 binding) lie at residues 54 to 56 (SPS) and 79 to 81 (SKS).

This sequence belongs to the serine rich endogenous peptide (SCOOP) phytocytokine family. In terms of assembly, interacts with MIK2 (via extracellular leucine-rich repeat domain); this interaction triggers the formation of complex between MIK2 and the BAK1/SERK3 and SERK4 coreceptors, and subsequent BAK1 activation by phosphorylation. As to expression, mostly expressed in seedlings shoots, and, to a lower extent, in roots.

The protein localises to the cell membrane. The protein resides in the secreted. It is found in the extracellular space. It localises to the apoplast. Brassicaceae-specific phytocytokine (plant endogenous peptide released into the apoplast) perceived by MIK2 in a BAK1/SERK3 and SERK4 coreceptors-dependent manner, that modulates various physiological and antimicrobial processes including growth prevention and reactive oxygen species (ROS) response regulation. Inhibits root growth. This Arabidopsis thaliana (Mouse-ear cress) protein is Serine rich endogenous peptide 6.